Reading from the N-terminus, the 394-residue chain is 3-phenylpropionate/cinnamic acid dioxygenase ferredoxin--NAD(+) reductase component (394 aa).

5-36 (TFIIVGAGQAGAMAAATLRQQQFDGDIILIGK) provides a ligand contact to FAD. 146–174 (RILIVGGGVIGLELAATSCELGANVTVIE) contacts NAD(+).

The protein belongs to the bacterial ring-hydroxylating dioxygenase ferredoxin reductase family. In terms of assembly, this dioxygenase system consists of four proteins: the two subunits of the hydroxylase component (HcaE and HcaF), a ferredoxin (HcaC) and a ferredoxin reductase (HcaD). FAD serves as cofactor.

It carries out the reaction 2 reduced [2Fe-2S]-[ferredoxin] + NAD(+) + H(+) = 2 oxidized [2Fe-2S]-[ferredoxin] + NADH. Its pathway is aromatic compound metabolism; 3-phenylpropanoate degradation. Part of the multicomponent 3-phenylpropionate dioxygenase, that converts 3-phenylpropionic acid (PP) and cinnamic acid (CI) into 3-phenylpropionate-dihydrodiol (PP-dihydrodiol) and cinnamic acid-dihydrodiol (CI-dihydrodiol), respectively. The protein is 3-phenylpropionate/cinnamic acid dioxygenase ferredoxin--NAD(+) reductase component of Photorhabdus laumondii subsp. laumondii (strain DSM 15139 / CIP 105565 / TT01) (Photorhabdus luminescens subsp. laumondii).